The primary structure comprises 167 residues: Small ribosomal subunit protein uS5 (167 aa).

An S5 DRBM domain is found at 11–74; the sequence is LQEKLIAVNR…EKARRNMINV (64 aa).

The protein belongs to the universal ribosomal protein uS5 family. In terms of assembly, part of the 30S ribosomal subunit. Contacts proteins S4 and S8.

Functionally, with S4 and S12 plays an important role in translational accuracy. Located at the back of the 30S subunit body where it stabilizes the conformation of the head with respect to the body. The sequence is that of Small ribosomal subunit protein uS5 from Klebsiella pneumoniae subsp. pneumoniae (strain ATCC 700721 / MGH 78578).